The sequence spans 81 residues: ATP synthase subunit c, chloroplastic (81 aa).

2 consecutive transmembrane segments (helical) span residues 3–23 (PLIS…ASIG) and 57–77 (LAFM…LLFA).

It belongs to the ATPase C chain family. F-type ATPases have 2 components, F(1) - the catalytic core - and F(0) - the membrane proton channel. F(1) has five subunits: alpha(3), beta(3), gamma(1), delta(1), epsilon(1). F(0) has four main subunits: a(1), b(1), b'(1) and c(10-14). The alpha and beta chains form an alternating ring which encloses part of the gamma chain. F(1) is attached to F(0) by a central stalk formed by the gamma and epsilon chains, while a peripheral stalk is formed by the delta, b and b' chains.

It localises to the plastid. The protein localises to the chloroplast thylakoid membrane. In terms of biological role, f(1)F(0) ATP synthase produces ATP from ADP in the presence of a proton or sodium gradient. F-type ATPases consist of two structural domains, F(1) containing the extramembraneous catalytic core and F(0) containing the membrane proton channel, linked together by a central stalk and a peripheral stalk. During catalysis, ATP synthesis in the catalytic domain of F(1) is coupled via a rotary mechanism of the central stalk subunits to proton translocation. Its function is as follows. Key component of the F(0) channel; it plays a direct role in translocation across the membrane. A homomeric c-ring of between 10-14 subunits forms the central stalk rotor element with the F(1) delta and epsilon subunits. This Ceratophyllum demersum (Rigid hornwort) protein is ATP synthase subunit c, chloroplastic.